Here is a 316-residue protein sequence, read N- to C-terminus: Serpentine receptor class delta-45 (316 aa).

7 helical membrane-spanning segments follow: residues 8-28 (VFYP…IFII), 42-62 (ILLV…LIQI), 91-111 (YFLT…TIYL), 128-148 (VTFF…SLIL), 184-204 (IIIT…GLLL), 234-254 (LQVF…LVLA), and 266-286 (FFSV…LYSV).

The protein belongs to the nematode receptor-like protein srd family.

The protein localises to the membrane. This Caenorhabditis elegans protein is Serpentine receptor class delta-45 (srd-45).